The following is a 358-amino-acid chain: Pre-mRNA-splicing factor spp2 (358 aa).

Disordered regions lie at residues Met-1–Pro-250 and Ala-298–Arg-358. Positions Lys-24 to Arg-40 are enriched in basic residues. 2 stretches are compositionally biased toward basic and acidic residues: residues Leu-80 to Arg-137 and Arg-145 to Gln-160. The segment covering Asn-174–Phe-185 has biased composition (polar residues). 2 stretches are compositionally biased toward basic and acidic residues: residues Ser-233–Tyr-246 and Gly-309–Arg-358.

Belongs to the SPP2 family. As to quaternary structure, associated with the spliceosome.

It localises to the nucleus. Its function is as follows. Involved in spliceosome maturation and the first step of pre-mRNA splicing. The protein is Pre-mRNA-splicing factor spp2 (msp-40) of Neurospora crassa (strain ATCC 24698 / 74-OR23-1A / CBS 708.71 / DSM 1257 / FGSC 987).